The sequence spans 36 residues: Neuropeptide F (36 aa).

A Phenylalanine amide modification is found at F36.

This sequence belongs to the NPY family. In terms of tissue distribution, central and peripheral nervous system, and muscular pharynx.

Its subcellular location is the secreted. In terms of biological role, may perform an important neurotransmitter function and may regulate muscular activity. This is Neuropeptide F from Arthurdendyus triangulatus (New Zealand flatworm).